The primary structure comprises 438 residues: Arginine deiminase-like protein (438 aa).

It belongs to the arginine deiminase family.

The chain is Arginine deiminase-like protein from Mycoplasma pneumoniae (strain ATCC 29342 / M129 / Subtype 1) (Mycoplasmoides pneumoniae).